Consider the following 520-residue polypeptide: Lysine--tRNA ligase (520 aa).

The segment at 1–21 (MSDHLIPSIPTPAAAPAAAPA) is disordered. The span at 12–21 (PAAAPAAAPA) shows a compositional bias: low complexity. Mg(2+) contacts are provided by Glu-430 and Glu-437.

Belongs to the class-II aminoacyl-tRNA synthetase family. As to quaternary structure, homodimer. Mg(2+) serves as cofactor.

The protein resides in the cytoplasm. It catalyses the reaction tRNA(Lys) + L-lysine + ATP = L-lysyl-tRNA(Lys) + AMP + diphosphate. The sequence is that of Lysine--tRNA ligase from Variovorax paradoxus (strain S110).